Reading from the N-terminus, the 239-residue chain is Leucine rich adaptor protein 1 (239 aa).

LRR repeat units follow at residues Leu55–Leu83 and Leu93–Leu114. The segment covering Leu107–Gly116 has biased composition (low complexity). 2 disordered regions span residues Leu107 to Leu139 and Lys200 to Ala219. Phosphoserine occurs at positions 118, 126, 129, and 213.

Forms a tripartite complex with CDC42BPA/CDC42BPB and MYO18A acting as an adapter connecting both. Its binding to CDC42BPA/CDC42BPB results in their activation by abolition of their negative autoregulation. Interacts with CDC42BPA and CDC42BPB.

The protein localises to the cytoplasm. Its function is as follows. Acts as an activator of the canonical NF-kappa-B pathway and drive the production of pro-inflammatory cytokines. Promotes the antigen (Ag)-presenting and priming function of dendritic cells via the canonical NF-kappa-B pathway. In concert with MYO18A and CDC42BPA/CDC42BPB, is involved in modulating lamellar actomyosin retrograde flow that is crucial to cell protrusion and migration. Activates CDC42BPA/CDC42BPB and targets it to actomyosin through its interaction with MYO18A, leading to MYL9/MLC2 phosphorylation and MYH9/MYH10-dependent actomyosin assembly in the lamella. The sequence is that of Leucine rich adaptor protein 1 (LURAP1) from Homo sapiens (Human).